Reading from the N-terminus, the 56-residue chain is Ribosome biogenesis protein Nop10 (56 aa).

It belongs to the NOP10 family.

In terms of biological role, involved in ribosome biogenesis; more specifically in 18S rRNA pseudouridylation and in cleavage of pre-rRNA. The protein is Ribosome biogenesis protein Nop10 of Saccharolobus islandicus (strain Y.N.15.51 / Yellowstone #2) (Sulfolobus islandicus).